A 561-amino-acid chain; its full sequence is uncharacterized protein (561 aa).

Disordered stretches follow at residues 369-390 (SVPE…LSKG) and 429-515 (EGLG…GESE). The residue at position 383 (serine 383) is a Phosphoserine. Residues 465–503 (NISPESSRFGTPSDPNSSSQSLGNEVLSRPNSNSNSAES) show a composition bias toward polar residues.

This is an uncharacterized protein from Schizosaccharomyces pombe (strain 972 / ATCC 24843) (Fission yeast).